The sequence spans 218 residues: RNA polymerase sigma-H factor (218 aa).

Residues 62–75 (DIVQEGMIGLYKSI) carry the Polymerase core binding motif. A DNA-binding region (H-T-H motif) is located at residues 182–201 (YQEISDELNRHVKSIDNALQ).

This sequence belongs to the sigma-70 factor family. As to quaternary structure, interacts transiently with the RNAP core.

Its function is as follows. Sigma factors are initiation factors that promote the attachment of RNA polymerase (RNAP) to specific initiation sites and are then released. This sigma factor is involved in the transition to post-exponential phase in the beginning of sporulation. It is also required for transcription of several stationary phase genes. Association with the RNAP core increases rapidly in early exponential phase, and reamins constant expression level after. The polypeptide is RNA polymerase sigma-H factor (sigH) (Bacillus subtilis (strain 168)).